The following is a 262-amino-acid chain: 26 kDa secreted antigen (262 aa).

The signal sequence occupies residues Met-1 to Gln-21. ShKT domains lie at Cys-23–Cys-57 and Cys-59–Cys-93. 6 cysteine pairs are disulfide-bonded: Cys-23–Cys-57, Cys-30–Cys-50, Cys-37–Cys-54, Cys-59–Cys-93, Cys-66–Cys-86, and Cys-73–Cys-90.

It belongs to the phosphatidylethanolamine-binding protein family.

The protein localises to the secreted. Binds phosphatidylethanolamine. This is 26 kDa secreted antigen (TES-26) from Toxocara canis (Canine roundworm).